An 83-amino-acid polypeptide reads, in one-letter code: Small ribosomal subunit protein uS17c (83 aa).

It belongs to the universal ribosomal protein uS17 family. In terms of assembly, part of the 30S ribosomal subunit.

It is found in the plastid. It localises to the chloroplast. Functionally, one of the primary rRNA binding proteins, it binds specifically to the 5'-end of 16S ribosomal RNA. This Porphyra purpurea (Red seaweed) protein is Small ribosomal subunit protein uS17c (rps17).